We begin with the raw amino-acid sequence, 388 residues long: Succinyl-diaminopimelate desuccinylase (388 aa).

Histidine 74 contributes to the Zn(2+) binding site. Aspartate 76 is an active-site residue. Aspartate 107 is a binding site for Zn(2+). Glutamate 142 (proton acceptor) is an active-site residue. Glutamate 143, glutamate 171, and histidine 360 together coordinate Zn(2+).

Belongs to the peptidase M20A family. DapE subfamily. As to quaternary structure, homodimer. It depends on Zn(2+) as a cofactor. Co(2+) serves as cofactor.

The catalysed reaction is N-succinyl-(2S,6S)-2,6-diaminopimelate + H2O = (2S,6S)-2,6-diaminopimelate + succinate. It functions in the pathway amino-acid biosynthesis; L-lysine biosynthesis via DAP pathway; LL-2,6-diaminopimelate from (S)-tetrahydrodipicolinate (succinylase route): step 3/3. In terms of biological role, catalyzes the hydrolysis of N-succinyl-L,L-diaminopimelic acid (SDAP), forming succinate and LL-2,6-diaminopimelate (DAP), an intermediate involved in the bacterial biosynthesis of lysine and meso-diaminopimelic acid, an essential component of bacterial cell walls. This Rhodopseudomonas palustris (strain BisB5) protein is Succinyl-diaminopimelate desuccinylase.